We begin with the raw amino-acid sequence, 320 residues long: Uroplakin-3b (320 aa).

Residues 1 to 29 (MGLPWGQPHLGLQMLLLALNCLRPSLSLG) form the signal peptide. Residues 30–240 (EWGSWMDASS…LHPLFSGRPP (211 aa)) are Lumenal-facing. N133 carries N-linked (GlcNAc...) asparagine glycosylation. A helical membrane pass occupies residues 241–266 (TLGLLGSLYHALLQPVVAGGGPGAAA). At 267–320 (DRLLHGQALHDPPHPTQRGRHTAGGLQAWPGPPPQPQPLAWPLCMGLGEMGRWE) the chain is on the cytoplasmic side. Positions 273–303 (QALHDPPHPTQRGRHTAGGLQAWPGPPPQPQ) are disordered.

This sequence belongs to the uroplakin-3 family. Heterodimer with uroplakin-1B (UPK1B).

The protein resides in the cell membrane. Component of the asymmetric unit membrane (AUM); a highly specialized biomembrane elaborated by terminally differentiated urothelial cells. May play an important role in AUM-cytoskeleton interaction in terminally differentiated urothelial cells. It also contributes to the formation of urothelial glycocalyx which may play an important role in preventing bacterial adherence. This is Uroplakin-3b (UPK3B) from Homo sapiens (Human).